Here is a 560-residue protein sequence, read N- to C-terminus: Triacylglyceride transporter MSMEG_3069/MSMEI_2992 (560 aa).

The next 14 membrane-spanning stretches (helical) occupy residues Leu-16–Met-36, Gln-48–Gly-68, Met-78–Ser-98, Ile-108–Leu-128, Ala-143–Phe-163, Ala-168–Leu-188, Val-200–Tyr-220, Val-229–Phe-249, Pro-269–Val-289, Ala-307–Leu-327, Val-336–Val-356, Phe-368–Ile-388, Val-411–Phe-431, and Ile-477–Gly-497. Residues Arg-362 to Pro-371 form a beta-hairpin region. The disordered stretch occupies residues Ile-519–Pro-560.

The protein belongs to the major facilitator superfamily. P55 (TC 2.A.1.3.34) family.

The protein resides in the cell inner membrane. Its activity is regulated as follows. Resistance to ethidium bromide is inhibited by reserpine. Its function is as follows. In association with lipoprotein LprG transports triacyglycerides (TAG) across the inner cell membrane into the periplasm; TAG probably regulates lipid metabolism and growth regulation and plays a structural role in the outer membrane. TAG (and maybe other lipids) enters the central cavity of the P55 transporter from within the cell inner membrane via clefts on the cytoplasmic face of P55 between TM5-TM8 and TM2-TM11. From there the lipid is probably transferred to the hydrophobic cavity of LprG. Confers resistance to ethidium bromide, possibly acting as an efflux pump, requires LprG lipoprotein for normal function. Export of ethidium bromide can be complemented by the equivalent operon from M.tuberculosis (lprG-Rv1410c). Involved in drug susceptibilty, its expression alone partially complements the antibiotic susceptibilty of a double lprG-mfs deletion. Probably does not function as a bona fide drug efflux pump, but instead plays a role in outer membrane biogenesis. Probably required with LprG for normal surface localization of lipoarabinomannan (LAM). The polypeptide is Triacylglyceride transporter MSMEG_3069/MSMEI_2992 (Mycolicibacterium smegmatis (strain ATCC 700084 / mc(2)155) (Mycobacterium smegmatis)).